The sequence spans 972 residues: MTDTTKIDYSKTLYLPQTEFPMRAGLPQREPLFVQRWEEMNLYKKLREQAKDRPLYVLHDGPPYANGNIHIGHALNKILKDVITRSFQMRGYNSNYVPGWDCHGLPIEWKIEEKYRAAGKNKDEVPINEFRKECREFASNWIRVQTEEFKRLAILGDFENPYTTMNFHAEARIAGELLKFAASGQLYRGSKPVMWSVVERTALAEAEVEYHDIESDMIWVKFPVAGEVATENDLSGSAVVIWTTTPWTIPGNRAVSYSSRIEYGLFEITEAENDFGPRPGERLVFADKLVEECCAKAKLQFKRLRSVSAEELGKIVLDHPLKGFGGGYEFVVPMLDGDHVTDDAGTGFVHTAPSHGREDFEAWMDNARQLEARGIDPNIPFPVGDDGFYTKDAPGFGPDREGGPARVIDDNGKKGDANKVVIEQLIAADKLFARGRLKHSYPHSWRSKKPVIFRNTPQWFVYMDKNLGDGTTLRSRALKVIDETRFVPTAGQTRLRSMIEGRPDWVLSRQRAWGVPICVFVDEEGNILQDDAVNKRIMDAFEKEGADAWFADGARERFLGARAGEGWTQVRDILDVWFDSGSTHTFTLEDRPDLKWPADVYLEGSDQHRGWFHSSLLESCGTRGRAPYNAVVTHGFTMDEHGKKMSKSLGNTVTPQDVIKESGADILRLWVMTTDYWEDQRLGKSIIQTNIDAYRKLRNTIRWMLGTLAHDEGENVAYADLPELERLMLHRLTELDELVRSGYDTFDFKRIARALVDFMNVELSAFYFDIRKDALYCDAPSSIRRKAALQTVREIFVRLTTWLAPMLPFTMEEAWLDRYPQSVSIHAEQFRPTPAEWRDDVLAEKWRKVRAVRRVVTGALELERADKRIGSSLEAAPVVYIADKSLSDSLEGLDFAEICITSGISVSDAAAPEGAFTLGDVKGVAVVPERAKGEKCARSWRYTTDVGADPEFPEVSARDAAALRELQALGKL.

A 'HIGH' region motif is present at residues Pro63–His73. Position 603 (Glu603) interacts with L-isoleucyl-5'-AMP. The short motif at Lys644–Ser648 is the 'KMSKS' region element. Lys647 provides a ligand contact to ATP.

Belongs to the class-I aminoacyl-tRNA synthetase family. IleS type 1 subfamily. As to quaternary structure, monomer.

Its subcellular location is the cytoplasm. The catalysed reaction is tRNA(Ile) + L-isoleucine + ATP = L-isoleucyl-tRNA(Ile) + AMP + diphosphate. Its function is as follows. Catalyzes the attachment of isoleucine to tRNA(Ile). As IleRS can inadvertently accommodate and process structurally similar amino acids such as valine, to avoid such errors it has two additional distinct tRNA(Ile)-dependent editing activities. One activity is designated as 'pretransfer' editing and involves the hydrolysis of activated Val-AMP. The other activity is designated 'posttransfer' editing and involves deacylation of mischarged Val-tRNA(Ile). The sequence is that of Isoleucine--tRNA ligase from Brucella melitensis biotype 1 (strain ATCC 23456 / CCUG 17765 / NCTC 10094 / 16M).